We begin with the raw amino-acid sequence, 270 residues long: Formamidopyrimidine-DNA glycosylase (270 aa).

Catalysis depends on Pro-2, which acts as the Schiff-base intermediate with DNA. The active-site Proton donor is Glu-3. Lys-58 serves as the catalytic Proton donor; for beta-elimination activity. DNA-binding residues include His-90, Arg-109, and Arg-152. The FPG-type zinc finger occupies Arg-237 to Lys-270. Arg-260 (proton donor; for delta-elimination activity) is an active-site residue.

It belongs to the FPG family. In terms of assembly, monomer. Requires Zn(2+) as cofactor.

The enzyme catalyses Hydrolysis of DNA containing ring-opened 7-methylguanine residues, releasing 2,6-diamino-4-hydroxy-5-(N-methyl)formamidopyrimidine.. The catalysed reaction is 2'-deoxyribonucleotide-(2'-deoxyribose 5'-phosphate)-2'-deoxyribonucleotide-DNA = a 3'-end 2'-deoxyribonucleotide-(2,3-dehydro-2,3-deoxyribose 5'-phosphate)-DNA + a 5'-end 5'-phospho-2'-deoxyribonucleoside-DNA + H(+). Its function is as follows. Involved in base excision repair of DNA damaged by oxidation or by mutagenic agents. Acts as a DNA glycosylase that recognizes and removes damaged bases. Has a preference for oxidized purines, such as 7,8-dihydro-8-oxoguanine (8-oxoG). Has AP (apurinic/apyrimidinic) lyase activity and introduces nicks in the DNA strand. Cleaves the DNA backbone by beta-delta elimination to generate a single-strand break at the site of the removed base with both 3'- and 5'-phosphates. The protein is Formamidopyrimidine-DNA glycosylase of Rhizorhabdus wittichii (strain DSM 6014 / CCUG 31198 / JCM 15750 / NBRC 105917 / EY 4224 / RW1) (Sphingomonas wittichii).